The sequence spans 495 residues: Cytochrome P450 94C1 (495 aa).

The chain crosses the membrane as a helical span at residues leucine 2–histidine 22. A heme-binding site is contributed by cysteine 439.

This sequence belongs to the cytochrome P450 family. It depends on heme as a cofactor.

It is found in the membrane. The protein localises to the endoplasmic reticulum membrane. It catalyses the reaction a 12-hydroxyjasmonyl-L-alpha-amino acid + 2 reduced [NADPH--hemoprotein reductase] + 2 O2 = a 12-hydroxy-12-oxojasmonyl-L-alpha-amino acid + 2 oxidized [NADPH--hemoprotein reductase] + 3 H2O + 3 H(+). Its function is as follows. Involved in the oxidation of the plant hormone jasmonoyl-L-isoleucine (JA-Ile), a bioactive phytohormone of the jasmonate-mediated signaling pathway. Converts 12-hydroxy-JA-Ile (12OH-JA-Ile) to the carboxy-derivative 12COOH-JA-Ile. Exerts negative feedback control on JA-Ile levels and plays a role in attenuation of jasmonate responses. Also functions as in-chain fatty acids hydroxylase in vitro. Catalyzes the hydroxylation of 12-hydroxy-jasmonoyl-L-phenylalanine (12OH-JA-Phe) in vitro. Converts 12OH-JA-Phe to the carboxy-derivative 12COOH-JA-Phe. The protein is Cytochrome P450 94C1 of Arabidopsis thaliana (Mouse-ear cress).